Consider the following 560-residue polypeptide: DNA ligase B (560 aa).

Lysine 124 acts as the N6-AMP-lysine intermediate in catalysis.

It belongs to the NAD-dependent DNA ligase family. LigB subfamily.

The catalysed reaction is NAD(+) + (deoxyribonucleotide)n-3'-hydroxyl + 5'-phospho-(deoxyribonucleotide)m = (deoxyribonucleotide)n+m + AMP + beta-nicotinamide D-nucleotide.. Catalyzes the formation of phosphodiester linkages between 5'-phosphoryl and 3'-hydroxyl groups in double-stranded DNA using NAD as a coenzyme and as the energy source for the reaction. This is DNA ligase B from Shigella sonnei (strain Ss046).